Reading from the N-terminus, the 38-residue chain is Large ribosomal subunit protein bL36 (38 aa).

The protein belongs to the bacterial ribosomal protein bL36 family.

This chain is Large ribosomal subunit protein bL36, found in Aster yellows witches'-broom phytoplasma (strain AYWB).